The sequence spans 185 residues: Acireductone dioxygenase (185 aa).

The Fe(2+) site is built by His97, His99, Glu103, and His141. Ni(2+) is bound by residues His97, His99, Glu103, and His141.

Belongs to the acireductone dioxygenase (ARD) family. In terms of assembly, monomer. Fe(2+) serves as cofactor. The cofactor is Ni(2+).

It catalyses the reaction 1,2-dihydroxy-5-(methylsulfanyl)pent-1-en-3-one + O2 = 3-(methylsulfanyl)propanoate + CO + formate + 2 H(+). The catalysed reaction is 1,2-dihydroxy-5-(methylsulfanyl)pent-1-en-3-one + O2 = 4-methylsulfanyl-2-oxobutanoate + formate + 2 H(+). The protein operates within amino-acid biosynthesis; L-methionine biosynthesis via salvage pathway; L-methionine from S-methyl-5-thio-alpha-D-ribose 1-phosphate: step 5/6. Its function is as follows. Catalyzes 2 different reactions between oxygen and the acireductone 1,2-dihydroxy-3-keto-5-methylthiopentene (DHK-MTPene) depending upon the metal bound in the active site. Fe-containing acireductone dioxygenase (Fe-ARD) produces formate and 2-keto-4-methylthiobutyrate (KMTB), the alpha-ketoacid precursor of methionine in the methionine recycle pathway. Ni-containing acireductone dioxygenase (Ni-ARD) produces methylthiopropionate, carbon monoxide and formate, and does not lie on the methionine recycle pathway. In Stenotrophomonas maltophilia (strain K279a), this protein is Acireductone dioxygenase.